Here is an 857-residue protein sequence, read N- to C-terminus: Gelation factor (857 aa).

Position 1 is a blocked amino end (Met) (methionine 1). Residues 1 to 250 (MAAAPSGKTW…EKKRRETSDA (250 aa)) are actin-binding. 2 Calponin-homology (CH) domains span residues 12–117 (DVQK…LRYQ) and 125–227 (NSPK…DYAL). The interval 229-246 (KEKRDADALAALEKKRRE) is regulatory site. Filamin repeat units follow at residues 245 to 346 (RETS…NVKI), 347 to 446 (DGSD…EVKI), 447 to 545 (LNSD…SIHI), 546 to 645 (KPAA…TVTV), 646 to 747 (KPAP…DVKC), and 763 to 837 (FTVA…KQVL). The interval 832–857 (PFKQVLGNPGKKNPEVKSFTTTRTAN) is disordered.

Homodimer.

Functionally, F-actin cross-linking protein. This is Gelation factor (abpC) from Dictyostelium discoideum (Social amoeba).